The primary structure comprises 790 residues: Phenylalanine--tRNA ligase beta subunit (790 aa).

A tRNA-binding domain is found at 39-154 (PDSLNTVVTG…ENTPLGESAC (116 aa)). A B5 domain is found at 404-483 (SDPLSLNIRP…FVQKTQKILP (80 aa)). Positions 457, 463, 466, and 467 each coordinate Mg(2+). In terms of domain architecture, FDX-ACB spans 694–790 (PIYPSSSRDI…NLANIGKGNS (97 aa)).

The protein belongs to the phenylalanyl-tRNA synthetase beta subunit family. Type 1 subfamily. In terms of assembly, tetramer of two alpha and two beta subunits. Mg(2+) serves as cofactor.

The protein resides in the cytoplasm. The catalysed reaction is tRNA(Phe) + L-phenylalanine + ATP = L-phenylalanyl-tRNA(Phe) + AMP + diphosphate + H(+). The sequence is that of Phenylalanine--tRNA ligase beta subunit (pheT) from Chlamydia muridarum (strain MoPn / Nigg).